The chain runs to 98 residues: Homeobox protein Ht-En (98 aa).

The homeobox DNA-binding region spans 3–62 (EKRPRTAFTGDQLARLKREFSENKYLTEQRRTCLAKELNLNESQIKIWFQNKRAKMKKAS). The interval 79-98 (NHSSSSSSSSSSSSSIFLLA) is disordered. The segment covering 81-98 (SSSSSSSSSSSSSIFLLA) has biased composition (low complexity).

This sequence belongs to the engrailed homeobox family. Post-translationally, phosphorylated in the Ser-rich domain.

The protein localises to the nucleus. Its function is as follows. This protein specifies the body segmentation pattern. In Helobdella triserialis (Leech), this protein is Homeobox protein Ht-En (HT-EN).